The primary structure comprises 737 residues: MAKQVFQTTFAGRELIVETGQVAKQANGSVVVRYGESTVLTAAVMSKKMATGDFFPLQVNYEEKMYAAGKFPGGFMKREGRPSTDATLTARLIDRPIRPMFAEGFRNEVQVINTVLSYDENASAPMAAMFGSSLALSISDIPFDGPIAGVQVGYVDGQIIINPSQEQAEQSLLELTVAGTKHAINMVESGAKELSEEIMLEALLKGHEAVKELIAFQEEIVAAVGKEKAEVELLHVDAELQAEIIAAYNSDLQKAVQVEEKLAREAATQVVKDQVTAVYEEKYADHEEFDRIMRDVAEILEQMEHAEVRRLITEDKVRPDGRKVDEIRPLDAVVDFLPRVHGSGLFTRGQTQALSVLTLAPMGETQIIDGLDLEYKKRFMHHYNFPQYSVGETGRYGAPGRREIGHGALGERALAQVLPSLEEFPYAIRLVAEVLESNGSSSQASICAGTLALMAGGVPIKAPVAGIAMGLISDGNNYTVLTDIQGLEDHFGDMDFKVAGTRDGITALQMDIKIQGITAEILTEALAQAKKARFEILDVIEATIPEVRPELAPTAPKIDTIKIDVDKIKIVIGKGGETIDKIIAETGVKIDIDEEGNVSIYSSDQDAINRAKEIIAGLVREAKVDEVYRAKVVRIEKFGAFVNLFDKTDALVHISEMAWTRTNRVEDLVEIGDEVDVKVIKIDEKGRIDASMKALLPRPPKPEHDEKGEKSERPHRPRHQKDHKPKKEFTETPKDSE.

Positions 489 and 495 each coordinate Mg(2+). A KH domain is found at 556 to 615 (PKIDTIKIDVDKIKIVIGKGGETIDKIIAETGVKIDIDEEGNVSIYSSDQDAINRAKEII). The S1 motif domain occupies 625 to 693 (DEVYRAKVVR…EKGRIDASMK (69 aa)). Residues 691-737 (SMKALLPRPPKPEHDEKGEKSERPHRPRHQKDHKPKKEFTETPKDSE) form a disordered region. Residues 700 to 714 (PKPEHDEKGEKSERP) show a composition bias toward basic and acidic residues. Basic residues predominate over residues 715-724 (HRPRHQKDHK). Positions 725-737 (PKKEFTETPKDSE) are enriched in basic and acidic residues.

The protein belongs to the polyribonucleotide nucleotidyltransferase family. Mg(2+) serves as cofactor.

It is found in the cytoplasm. The enzyme catalyses RNA(n+1) + phosphate = RNA(n) + a ribonucleoside 5'-diphosphate. Functionally, involved in mRNA degradation. Catalyzes the phosphorolysis of single-stranded polyribonucleotides processively in the 3'- to 5'-direction. The chain is Polyribonucleotide nucleotidyltransferase from Streptococcus pneumoniae (strain JJA).